The following is a 235-amino-acid chain: Putative 4'-phosphopantetheinyl transferase HI_0152 (235 aa).

The Mg(2+) site is built by Asp112, Glu114, and Glu155.

This sequence belongs to the P-Pant transferase superfamily. Gsp/Sfp/HetI/AcpT family. Mg(2+) is required as a cofactor.

Functionally, may transfer the 4'-phosphopantetheine moiety from coenzyme A (CoA) to a serine residue of a carrier protein domain. The protein is Putative 4'-phosphopantetheinyl transferase HI_0152 of Haemophilus influenzae (strain ATCC 51907 / DSM 11121 / KW20 / Rd).